Consider the following 838-residue polypeptide: Ras-interacting protein RIP3 (838 aa).

3 disordered regions span residues Val-66 to Ala-97, Lys-157 to Lys-290, and Asn-305 to Ala-336. Composition is skewed to low complexity over residues Ser-67–Ala-97, Lys-157–Pro-241, and Pro-248–Gln-284. Over residues Gln-310–Lys-321 the composition is skewed to basic and acidic residues. The CRIM domain maps to Gln-441–Asn-515. Disordered stretches follow at residues Lys-522–Gln-581 and Gln-594–Ala-646. Low complexity-rich tracts occupy residues Asn-537–Asn-556, Gln-563–Gln-581, and Gln-594–Gln-620. Over residues Val-621–Asn-631 the composition is skewed to gly residues. An RBD domain is found at Leu-648 to Arg-717.

This sequence belongs to the SIN1 family. As to quaternary structure, interacts with activated RasG. Part of a complex, TORC2, consisting of tor, lst8, piaA and ripA. Additional proteins, such as 14-3-3 and heat-shock proteins, may also belong to the TORC2 complex.

Functionally, component of a Ras-regulated pathway involved in integrating chemotaxis and signal relay pathways that are essential for aggregation. This Dictyostelium discoideum (Social amoeba) protein is Ras-interacting protein RIP3 (ripA).